We begin with the raw amino-acid sequence, 254 residues long: MLTRRIIPCLDVTGGRVVKGVQFLELRDAGDPVEIAEAYDLQGADELTFLDITASSDGRDTMVDVVRHTAERVFMPLTVGGGIRVVEDIRRMLNAGADKVSINTAAVSRPEFVNEAAERFGSQCTVVAIDARQVPGEQRWEVYTHGGRKPTGIDAVEWAVRMESYGAGEILLTSMDRDGTKDGYDLALTRAVVDAVSIPVIASGGVGNLEHLYDGFTTAGASACLAASIFHFRQHTVQEAKQYLQGRGVPIRMV.

Active-site residues include Asp-11 and Asp-130.

This sequence belongs to the HisA/HisF family. In terms of assembly, heterodimer of HisH and HisF.

The protein localises to the cytoplasm. The catalysed reaction is 5-[(5-phospho-1-deoxy-D-ribulos-1-ylimino)methylamino]-1-(5-phospho-beta-D-ribosyl)imidazole-4-carboxamide + L-glutamine = D-erythro-1-(imidazol-4-yl)glycerol 3-phosphate + 5-amino-1-(5-phospho-beta-D-ribosyl)imidazole-4-carboxamide + L-glutamate + H(+). The protein operates within amino-acid biosynthesis; L-histidine biosynthesis; L-histidine from 5-phospho-alpha-D-ribose 1-diphosphate: step 5/9. Functionally, IGPS catalyzes the conversion of PRFAR and glutamine to IGP, AICAR and glutamate. The HisF subunit catalyzes the cyclization activity that produces IGP and AICAR from PRFAR using the ammonia provided by the HisH subunit. The chain is Imidazole glycerol phosphate synthase subunit HisF from Trichlorobacter lovleyi (strain ATCC BAA-1151 / DSM 17278 / SZ) (Geobacter lovleyi).